We begin with the raw amino-acid sequence, 504 residues long: uncharacterized protein (504 aa).

The protein to M.thermoautotrophicum MTH1137.

This is an uncharacterized protein from Methanocaldococcus jannaschii (strain ATCC 43067 / DSM 2661 / JAL-1 / JCM 10045 / NBRC 100440) (Methanococcus jannaschii).